Reading from the N-terminus, the 224-residue chain is Protein LURP-one-related 1 (224 aa).

The interval 1 to 23 (MQQPYEYRYPQGTGPSAPPPPPK) is disordered.

Belongs to the LOR family.

In terms of biological role, might be related to the phospholipid scramblase and tubby-like superfamily of membrane tethered transcription factors. This Arabidopsis thaliana (Mouse-ear cress) protein is Protein LURP-one-related 1.